A 140-amino-acid polypeptide reads, in one-letter code: Large ribosomal subunit protein uL11 (140 aa).

The protein belongs to the universal ribosomal protein uL11 family. Part of the ribosomal stalk of the 50S ribosomal subunit. Interacts with L10 and the large rRNA to form the base of the stalk. L10 forms an elongated spine to which L12 dimers bind in a sequential fashion forming a multimeric L10(L12)X complex. In terms of processing, one or more lysine residues are methylated.

Its function is as follows. Forms part of the ribosomal stalk which helps the ribosome interact with GTP-bound translation factors. The sequence is that of Large ribosomal subunit protein uL11 from Thermoanaerobacter pseudethanolicus (strain ATCC 33223 / 39E) (Clostridium thermohydrosulfuricum).